The chain runs to 345 residues: Mycothiol acetyltransferase (345 aa).

N-acetyltransferase domains are found at residues 6–149 (DTYE…KAME) and 164–345 (FEVL…RGRL). Glutamate 39 is a binding site for 1D-myo-inositol 2-(L-cysteinylamino)-2-deoxy-alpha-D-glucopyranoside. 76-78 (LAV) contributes to the acetyl-CoA binding site. 3 residues coordinate 1D-myo-inositol 2-(L-cysteinylamino)-2-deoxy-alpha-D-glucopyranoside: glutamate 198, lysine 261, and glutamate 277. Acetyl-CoA contacts are provided by residues 281–283 (VCL) and 288–294 (RGRGLGQ). 1D-myo-inositol 2-(L-cysteinylamino)-2-deoxy-alpha-D-glucopyranoside is bound at residue tyrosine 315.

The protein belongs to the acetyltransferase family. MshD subfamily. As to quaternary structure, monomer.

The catalysed reaction is 1D-myo-inositol 2-(L-cysteinylamino)-2-deoxy-alpha-D-glucopyranoside + acetyl-CoA = mycothiol + CoA + H(+). In terms of biological role, catalyzes the transfer of acetyl from acetyl-CoA to desacetylmycothiol (Cys-GlcN-Ins) to form mycothiol. The protein is Mycothiol acetyltransferase of Corynebacterium jeikeium (strain K411).